The primary structure comprises 236 residues: Eukaryotic translation initiation factor 3 subunit J (236 aa).

Residues 1-86 are disordered; it reads MADDWESAAD…KEEEEQKRLA (86 aa). Residues 28–46 are compositionally biased toward acidic residues; sequence GEDDDEDVKESWEDEEEKK. 2 stretches are compositionally biased toward basic and acidic residues: residues 47–58 and 68–86; these read DEEKPTKTEAPV and AKLE…KRLA. The stretch at 61 to 115 forms a coiled coil; the sequence is KPNKALKAKLEEQERLKEEEEQKRLAEMTPEEKLAEKLRLQKIQEESDLKSALET.

This sequence belongs to the eIF-3 subunit J family. In terms of assembly, component of the eukaryotic translation initiation factor 3 (eIF-3) complex. The eIF-3 complex interacts with pix.

The protein resides in the cytoplasm. Functionally, component of the eukaryotic translation initiation factor 3 (eIF-3) complex, which is involved in protein synthesis of a specialized repertoire of mRNAs and, together with other initiation factors, stimulates binding of mRNA and methionyl-tRNAi to the 40S ribosome. The eIF-3 complex specifically targets and initiates translation of a subset of mRNAs involved in cell proliferation. In Drosophila mojavensis (Fruit fly), this protein is Eukaryotic translation initiation factor 3 subunit J.